The primary structure comprises 84 residues: Putative membrane protein insertion efficiency factor (84 aa).

The disordered stretch occupies residues 61-84 (SQGFEDPLPPNTKRTNLTHGRQTK). The segment covering 72 to 84 (TKRTNLTHGRQTK) has biased composition (polar residues).

Belongs to the UPF0161 family.

The protein resides in the cell inner membrane. Functionally, could be involved in insertion of integral membrane proteins into the membrane. In Leptospira borgpetersenii serovar Hardjo-bovis (strain JB197), this protein is Putative membrane protein insertion efficiency factor.